The chain runs to 180 residues: Putative manganese efflux pump MntP (180 aa).

5 helical membrane-spanning segments follow: residues 6–26, 33–53, 63–83, 101–121, and 130–150; these read VLLL…GLGL, MAWM…VAGW, VGRW…VKMV, GFLG…SVGF, and LLLT…AAFV.

The protein belongs to the MntP (TC 9.B.29) family.

It is found in the cell membrane. In terms of biological role, probably functions as a manganese efflux pump. The sequence is that of Putative manganese efflux pump MntP from Desulforudis audaxviator (strain MP104C).